The primary structure comprises 301 residues: MYHTPVLLKEMLDILSPQNGGIYVDATFGSGGYSRAILNSADCQVYAIDQDEYTYTFYEKLSNDFPNRIHFFINKFSKIQQILNNVQIKKVDGVVFDIGVSSMQLEDASRGFSFSKNGPLDMRMSTSLSGVDARMFVNTVSEVEMANVIYQYGGEKYSRKIARAIVNARNKNMINTTGELASIIRSVVSRSKNHSIDPATRTFQAIRIWVNKELEELEKGIACAANILNQGGKIIVISFHSLEDRIVKVIFKLLCDGKSVNLLNLGLGFQLINKKIIRPTAEEIHSNPRARSAKLRAILKL.

S-adenosyl-L-methionine-binding positions include 31–33, D49, F76, D97, and Q104; that span reads GGY.

It belongs to the methyltransferase superfamily. RsmH family.

It is found in the cytoplasm. It carries out the reaction cytidine(1402) in 16S rRNA + S-adenosyl-L-methionine = N(4)-methylcytidine(1402) in 16S rRNA + S-adenosyl-L-homocysteine + H(+). In terms of biological role, specifically methylates the N4 position of cytidine in position 1402 (C1402) of 16S rRNA. This is Ribosomal RNA small subunit methyltransferase H from Ehrlichia ruminantium (strain Welgevonden).